Consider the following 167-residue polypeptide: EF-hand calcium-binding domain-containing protein 11 (167 aa).

3 EF-hand domains span residues 17 to 52, 91 to 126, and 127 to 162; these read AERK…LFGY, DPYE…VAPR, and LQER…GLAN. Ca(2+) is bound by residues D140, D142, D144, H146, and D151.

In Danio rerio (Zebrafish), this protein is EF-hand calcium-binding domain-containing protein 11 (efcab11).